The following is a 307-amino-acid chain: Mycothiol acetyltransferase (307 aa).

2 N-acetyltransferase domains span residues 15 to 158 (HTLD…LAEP) and 164 to 307 (VTVR…RTES). Residue E46 participates in 1D-myo-inositol 2-(L-cysteinylamino)-2-deoxy-alpha-D-glucopyranoside binding. 90-92 (LVV) is a binding site for acetyl-CoA. Positions 191, 230, and 239 each coordinate 1D-myo-inositol 2-(L-cysteinylamino)-2-deoxy-alpha-D-glucopyranoside. Residues 243-245 (VGV) and 250-256 (QGGGLGK) each bind acetyl-CoA. Y277 is a 1D-myo-inositol 2-(L-cysteinylamino)-2-deoxy-alpha-D-glucopyranoside binding site.

This sequence belongs to the acetyltransferase family. MshD subfamily. Monomer.

It carries out the reaction 1D-myo-inositol 2-(L-cysteinylamino)-2-deoxy-alpha-D-glucopyranoside + acetyl-CoA = mycothiol + CoA + H(+). Catalyzes the transfer of acetyl from acetyl-CoA to desacetylmycothiol (Cys-GlcN-Ins) to form mycothiol. The polypeptide is Mycothiol acetyltransferase (Streptomyces griseus subsp. griseus (strain JCM 4626 / CBS 651.72 / NBRC 13350 / KCC S-0626 / ISP 5235)).